The following is a 214-amino-acid chain: MKIILLGAPGAGKGTQAQFIMNKFGIPQISTGDMLRAAIKAGTELGKQAKTLMDAGQLVPDDLIIALVQDRVAQPDCEKGFLLDGFPRTIPQADALKAAGIGIDYVLEFDVADEVIVERMSGRRVHPASGRSYHVVYNPPKVEGKDDVTGEDLIIRADDKPETVLDRLKVYHTTTRPLVDYYQAEAKAGNTRYFRLDGTQPVEAVSRELDKILA.

Position 10-15 (10-15 (GAGKGT)) interacts with ATP. Positions 30 to 59 (STGDMLRAAIKAGTELGKQAKTLMDAGQLV) are NMP. AMP-binding positions include T31, R36, 57-59 (QLV), 85-88 (GFPR), and Q92. The interval 122 to 159 (GRRVHPASGRSYHVVYNPPKVEGKDDVTGEDLIIRADD) is LID. Residues R123 and 132–133 (SY) each bind ATP. AMP is bound by residues R156 and R167. Q200 provides a ligand contact to ATP.

It belongs to the adenylate kinase family. As to quaternary structure, monomer.

Its subcellular location is the cytoplasm. The enzyme catalyses AMP + ATP = 2 ADP. Its pathway is purine metabolism; AMP biosynthesis via salvage pathway; AMP from ADP: step 1/1. Catalyzes the reversible transfer of the terminal phosphate group between ATP and AMP. Plays an important role in cellular energy homeostasis and in adenine nucleotide metabolism. The chain is Adenylate kinase from Actinobacillus succinogenes (strain ATCC 55618 / DSM 22257 / CCUG 43843 / 130Z).